A 256-amino-acid chain; its full sequence is 2-C-methyl-D-erythritol 4-phosphate cytidylyltransferase (256 aa).

Belongs to the IspD/TarI cytidylyltransferase family. IspD subfamily.

The catalysed reaction is 2-C-methyl-D-erythritol 4-phosphate + CTP + H(+) = 4-CDP-2-C-methyl-D-erythritol + diphosphate. It functions in the pathway isoprenoid biosynthesis; isopentenyl diphosphate biosynthesis via DXP pathway; isopentenyl diphosphate from 1-deoxy-D-xylulose 5-phosphate: step 2/6. Its function is as follows. Catalyzes the formation of 4-diphosphocytidyl-2-C-methyl-D-erythritol from CTP and 2-C-methyl-D-erythritol 4-phosphate (MEP). In Corynebacterium glutamicum (strain R), this protein is 2-C-methyl-D-erythritol 4-phosphate cytidylyltransferase.